The primary structure comprises 290 residues: uncharacterized protein (290 aa).

Positions 161 to 216 form a coiled coil; that stretch reads SNQREVESLEQLVHEQLNKLNTESKMEFENRKNDTKNEVQQLSARIVELHNLLAVS. The helical transmembrane segment at 236–256 threads the bilayer; sequence AGVVMAFTGFLVLVIPFGLGV.

Its subcellular location is the mitochondrion membrane. This is an uncharacterized protein from Schizosaccharomyces pombe (strain 972 / ATCC 24843) (Fission yeast).